The following is a 642-amino-acid chain: MQVAGKELEVQQGALCGEVLKEALSKKQFKNVVVAKCGDTLLDLTTTVPADCTDLEPVMADSKEGLEVIRHSTAHLMAEAVKKLFPTAKVTIGPSIASGFYYDFDYERPFTPEDLEAIEAEMLRRVGANEEFTREVLSSADALKKFEEMGEDYKIELINDLGEETVSVYTNGEFADLCRGPHVARTGMLKAFKLLSVAGAYWRGDENRQQLQRIYGTAFPDPKALKKHLAQIEEAKKRDHRKLGTQLDLFSVNPEVGAGMTIWHPKGALIRAILEDFERKEHLKRGYQFVQGPLILKRELWEKSGHYDNYRENMYFTEIDEQSYGIKPMNCLSHMLVFKSRLRSYRDLPQRYFEHGVVHRHEKSGVLHGLLRVRTFTQDDAHLICRPDQLRDEIIGVAKFVGDVMGLFGFEYEAEVSTKPEKAIGSDEDWDRATEALEGALKEMGMEYSINEGDGAFYGPKIDIIIKDALERRWQCATIQCDFTLPERFDLSYVGEDGERHRPVMLHRVILGSIERFIGVLLEHTGGALPAWLSPVQAKILTVTDSQNEFAQKVLQFLREKGIRAEVDDRNEKLGYKVREAQLEKIPYMLVIGDKEVAAESVNVRARDGEDPGLKSLEEAAELISTAIDEPFKRGGMSYSFS.

Positions 1 to 58 constitute a TGS domain; the sequence is MQVAGKELEVQQGALCGEVLKEALSKKQFKNVVVAKCGDTLLDLTTTVPADCTDLEPV. The interval 239-530 is catalytic; it reads DHRKLGTQLD…LLEHTGGALP (292 aa). Residues cysteine 331, histidine 382, and histidine 507 each coordinate Zn(2+).

Belongs to the class-II aminoacyl-tRNA synthetase family. In terms of assembly, homodimer. It depends on Zn(2+) as a cofactor.

It is found in the cytoplasm. It catalyses the reaction tRNA(Thr) + L-threonine + ATP = L-threonyl-tRNA(Thr) + AMP + diphosphate + H(+). Catalyzes the attachment of threonine to tRNA(Thr) in a two-step reaction: L-threonine is first activated by ATP to form Thr-AMP and then transferred to the acceptor end of tRNA(Thr). Also edits incorrectly charged L-seryl-tRNA(Thr). The protein is Threonine--tRNA ligase of Maridesulfovibrio salexigens (strain ATCC 14822 / DSM 2638 / NCIMB 8403 / VKM B-1763) (Desulfovibrio salexigens).